The following is a 153-amino-acid chain: 3-hydroxyacyl-[acyl-carrier-protein] dehydratase FabZ (153 aa).

Histidine 57 is an active-site residue.

Belongs to the thioester dehydratase family. FabZ subfamily.

The protein localises to the cytoplasm. The enzyme catalyses a (3R)-hydroxyacyl-[ACP] = a (2E)-enoyl-[ACP] + H2O. Its function is as follows. Involved in unsaturated fatty acids biosynthesis. Catalyzes the dehydration of short chain beta-hydroxyacyl-ACPs and long chain saturated and unsaturated beta-hydroxyacyl-ACPs. The polypeptide is 3-hydroxyacyl-[acyl-carrier-protein] dehydratase FabZ (Aeromonas salmonicida (strain A449)).